The following is a 691-amino-acid chain: Guanylate cyclase soluble subunit alpha-1 (691 aa).

Positions 26-65 (PREPLGEATGSGPASTPGQPGVCPGVPDKNPPGRLPRRKT) are disordered. In terms of domain architecture, Guanylate cyclase spans 482–609 (TMLFSDIVGF…NNVTLANKFE (128 aa)).

Belongs to the adenylyl cyclase class-4/guanylyl cyclase family. Heterodimer of an alpha and a beta chain.

It is found in the cytoplasm. It carries out the reaction GTP = 3',5'-cyclic GMP + diphosphate. Activated by nitric oxide in the presence of magnesium or manganese ions. This Bos taurus (Bovine) protein is Guanylate cyclase soluble subunit alpha-1 (GUCY1A1).